The following is a 306-amino-acid chain: Agmatinase (306 aa).

Residues His-126, Asp-149, His-151, Asp-153, Asp-230, and Asp-232 each coordinate Mn(2+).

This sequence belongs to the arginase family. Agmatinase subfamily. Mn(2+) serves as cofactor.

The enzyme catalyses agmatine + H2O = urea + putrescine. It functions in the pathway amine and polyamine biosynthesis; putrescine biosynthesis via agmatine pathway; putrescine from agmatine: step 1/1. In terms of biological role, catalyzes the formation of putrescine from agmatine. The chain is Agmatinase from Escherichia coli (strain SE11).